Here is a 329-residue protein sequence, read N- to C-terminus: Flotillin-like protein FloA (329 aa).

2 helical membrane passes run 5 to 25 and 27 to 47; these read IFLL…LSFI and LGLW…TLVG.

The protein belongs to the flotillin-like FloA family. As to quaternary structure, homooligomerizes.

It localises to the cell membrane. The protein localises to the membrane raft. In terms of biological role, found in functional membrane microdomains (FMM) that may be equivalent to eukaryotic membrane rafts. FMMs are highly dynamic and increase in number as cells age. Flotillins are thought to be important factors in membrane fluidity. This Thermoanaerobacter sp. (strain X514) protein is Flotillin-like protein FloA.